Consider the following 340-residue polypeptide: Annexin A2-A (340 aa).

The P10 binding site stretch occupies residues 2-25 (ALIHEILGKLSLEGNQSCARQSAL). Annexin repeat units lie at residues 34–105 (FDAE…GLIK), 106–177 (TRPQ…ALAK), 190–262 (EKID…NLVQ), and 266–337 (NKPL…NLCG).

This sequence belongs to the annexin family. Tetramer of 2 light chains (p10 proteins) and 2 heavy chains (p36 proteins).

The protein localises to the secreted. It localises to the extracellular space. It is found in the extracellular matrix. Its subcellular location is the basement membrane. In terms of biological role, calcium-regulated membrane-binding protein whose affinity for calcium is greatly enhanced by anionic phospholipids. It binds two calcium ions with high affinity. This Xenopus laevis (African clawed frog) protein is Annexin A2-A (anxa2-a).